Consider the following 89-residue polypeptide: uncharacterized protein (89 aa).

The segment at 66–89 is disordered; sequence RIKEQSSSSSATRTTQEPSLHLPD.

This is an uncharacterized protein from Cestrum parqui (CmYLCV).